The primary structure comprises 118 residues: Large ribosomal subunit protein uL18 (118 aa).

Positions 1 to 22 (MISKPDKNKLRQKRHRRVRGKL) are disordered. The span at 10–20 (LRQKRHRRVRG) shows a compositional bias: basic residues.

Belongs to the universal ribosomal protein uL18 family. As to quaternary structure, part of the 50S ribosomal subunit; part of the 5S rRNA/L5/L18/L25 subcomplex. Contacts the 5S and 23S rRNAs.

Functionally, this is one of the proteins that bind and probably mediate the attachment of the 5S RNA into the large ribosomal subunit, where it forms part of the central protuberance. This Streptococcus thermophilus (strain ATCC BAA-491 / LMD-9) protein is Large ribosomal subunit protein uL18.